A 961-amino-acid polypeptide reads, in one-letter code: DNA replication licensing factor MCM2 (961 aa).

The segment covering 1-17 (MDDSENNAPSTPGSPGF) has biased composition (polar residues). Disordered regions lie at residues 1–81 (MDDS…FNDN) and 120–220 (AEAE…EEDE). Positions 39–78 (SDDDDDDVVGAEEAEVDPNVLPEDDGVVAAEEEEDGEDLF) are enriched in acidic residues. Basic and acidic residues-rich tracts occupy residues 120–146 (AEAELDARDVRTGAAPDRKLPRMLHDQ) and 166–176 (PPREPRTPRSD). Over residues 205–220 (QTDDDPYEDEFDEEDE) the composition is skewed to acidic residues. The segment at 380–406 (CSKCGTVLGPFFQNSYTEVKVGSCPEC) adopts a C4-type zinc-finger fold. The MCM domain maps to 524-730 (IGERIVKSIA…FTDEMLARFV (207 aa)). 574 to 581 (GDPGTAKS) contributes to the ATP binding site. Residues 706–709 (SRFD) carry the Arginine finger motif.

This sequence belongs to the MCM family. Component of the minichromosome maintenance (MCM) complex, a heterotetramer composed of MCM2, MCM3, MCM4, MCM5, MCM6 and MCM7.

The protein localises to the nucleus. The enzyme catalyses ATP + H2O = ADP + phosphate + H(+). Its function is as follows. Probable component of the MCM2-7 complex (MCM complex) that may function as a DNA helicase and which is essential to undergo a single round of replication initiation and elongation per cell cycle in eukaryotic cells. The sequence is that of DNA replication licensing factor MCM2 from Oryza sativa subsp. indica (Rice).